Consider the following 246-residue polypeptide: 1-(5-phosphoribosyl)-5-[(5-phosphoribosylamino)methylideneamino] imidazole-4-carboxamide isomerase (246 aa).

Catalysis depends on aspartate 8, which acts as the Proton acceptor. Aspartate 131 functions as the Proton donor in the catalytic mechanism.

Belongs to the HisA/HisF family.

It is found in the cytoplasm. It catalyses the reaction 1-(5-phospho-beta-D-ribosyl)-5-[(5-phospho-beta-D-ribosylamino)methylideneamino]imidazole-4-carboxamide = 5-[(5-phospho-1-deoxy-D-ribulos-1-ylimino)methylamino]-1-(5-phospho-beta-D-ribosyl)imidazole-4-carboxamide. The protein operates within amino-acid biosynthesis; L-histidine biosynthesis; L-histidine from 5-phospho-alpha-D-ribose 1-diphosphate: step 4/9. This is 1-(5-phosphoribosyl)-5-[(5-phosphoribosylamino)methylideneamino] imidazole-4-carboxamide isomerase from Polaromonas naphthalenivorans (strain CJ2).